The sequence spans 372 residues: Alanine dehydrogenase 1 (372 aa).

Residue His-94 is part of the active site. Residue 170 to 200 (TYVIFGGGVAATNAANVALGLNAKVIIIELN) participates in NAD(+) binding.

It belongs to the AlaDH/PNT family.

It carries out the reaction L-alanine + NAD(+) + H2O = pyruvate + NH4(+) + NADH + H(+). The protein operates within amino-acid degradation; L-alanine degradation via dehydrogenase pathway; NH(3) and pyruvate from L-alanine: step 1/1. May play a role in cell wall synthesis as L-alanine is an important constituent of the peptidoglycan layer. The polypeptide is Alanine dehydrogenase 1 (ald1) (Staphylococcus aureus (strain bovine RF122 / ET3-1)).